Reading from the N-terminus, the 2603-residue chain is Squalestatin tetraketide synthase (2603 aa).

The region spanning T29 to S455 is the Ketosynthase family 3 (KS3) domain. Residues C202, H337, and H377 each act as for beta-ketoacyl synthase activity in the active site. The disordered stretch occupies residues I463–E512. The span at R469–G479 shows a compositional bias: gly residues. Low complexity predominate over residues A480–H497. The malonyl-CoA:ACP transacylase (MAT) domain stretch occupies residues V608 to Q931. The tract at residues H1000–S1138 is N-terminal hotdog fold. The 315-residue stretch at H1000–Q1314 folds into the PKS/mFAS DH domain. The segment at H1000 to Q1314 is dehydratase (DH) domain. H1032 acts as the Proton acceptor; for dehydratase activity in catalysis. The tract at residues L1157 to Q1314 is C-terminal hotdog fold. The active-site Proton donor; for dehydratase activity is D1223. Residues L1465 to D1665 form a methyltransferase (CMet) domain region. Positions G1892–I2205 are enoyl reductase (ER) (ER) domain. Positions A2228–Q2406 are ketoreductase (KR) domain. Residues E2516–S2593 form the Carrier domain. The residue at position 2553 (S2553) is an O-(pantetheine 4'-phosphoryl)serine.

It participates in secondary metabolite biosynthesis. Highly reducing polyketide synthase (HR-PKS); part of the gene cluster that mediates the biosynthesis of squalestatin S1 (SQS1, also known as zaragozic acid A), a lead compound for the treatment of hyper-cholesterolemia by targeting squalene synthase (SS). Pks1 is responsible for the biosynthesis of the tetraketide sidechain of SQS1. The biosynthesis must involve 3 rounds of chain extension. After the first and second rounds methyl-transfer occurs, and in all rounds of extension the ketoreductase and dehydratase are active. The enoyl reductase and C-MeT are not active in the final round of extension. The chain is Squalestatin tetraketide synthase from Phoma sp. (strain C2932).